We begin with the raw amino-acid sequence, 278 residues long: 4-diphosphocytidyl-2-C-methyl-D-erythritol kinase (278 aa).

Lys9 is a catalytic residue. Residue 93–103 (PISAGLAGGSS) coordinates ATP. Asp135 is an active-site residue.

The protein belongs to the GHMP kinase family. IspE subfamily.

It catalyses the reaction 4-CDP-2-C-methyl-D-erythritol + ATP = 4-CDP-2-C-methyl-D-erythritol 2-phosphate + ADP + H(+). It functions in the pathway isoprenoid biosynthesis; isopentenyl diphosphate biosynthesis via DXP pathway; isopentenyl diphosphate from 1-deoxy-D-xylulose 5-phosphate: step 3/6. Its function is as follows. Catalyzes the phosphorylation of the position 2 hydroxy group of 4-diphosphocytidyl-2C-methyl-D-erythritol. This chain is 4-diphosphocytidyl-2-C-methyl-D-erythritol kinase, found in Finegoldia magna (strain ATCC 29328 / DSM 20472 / WAL 2508) (Peptostreptococcus magnus).